Here is a 272-residue protein sequence, read N- to C-terminus: Dermonecrotic toxin SpeSicTox-betaIB2a (272 aa).

H5 is an active-site residue. Residues E25 and D27 each contribute to the Mg(2+) site. The Nucleophile role is filled by H41. Cystine bridges form between C45-C51 and C47-C191. Residue D85 coordinates Mg(2+).

The protein belongs to the arthropod phospholipase D family. Class II subfamily. The cofactor is Mg(2+). In terms of tissue distribution, expressed by the venom gland.

Its subcellular location is the secreted. It carries out the reaction an N-(acyl)-sphingosylphosphocholine = an N-(acyl)-sphingosyl-1,3-cyclic phosphate + choline. The enzyme catalyses an N-(acyl)-sphingosylphosphoethanolamine = an N-(acyl)-sphingosyl-1,3-cyclic phosphate + ethanolamine. It catalyses the reaction a 1-acyl-sn-glycero-3-phosphocholine = a 1-acyl-sn-glycero-2,3-cyclic phosphate + choline. The catalysed reaction is a 1-acyl-sn-glycero-3-phosphoethanolamine = a 1-acyl-sn-glycero-2,3-cyclic phosphate + ethanolamine. Dermonecrotic toxins cleave the phosphodiester linkage between the phosphate and headgroup of certain phospholipids (sphingolipid and lysolipid substrates), forming an alcohol (often choline) and a cyclic phosphate. This toxin acts on sphingomyelin (SM). It may also act on ceramide phosphoethanolamine (CPE), lysophosphatidylcholine (LPC) and lysophosphatidylethanolamine (LPE), but not on lysophosphatidylserine (LPS), and lysophosphatidylglycerol (LPG). It acts by transphosphatidylation, releasing exclusively cyclic phosphate products as second products. Induces dermonecrosis, hemolysis, increased vascular permeability, edema, inflammatory response, and platelet aggregation. The polypeptide is Dermonecrotic toxin SpeSicTox-betaIB2a (Sicarius peruensis (Six-eyed sand spider)).